We begin with the raw amino-acid sequence, 745 residues long: Exocyst complex component 3 (745 aa).

Lys28 bears the N6-acetyllysine mark.

The protein belongs to the SEC6 family. As to quaternary structure, the exocyst complex is composed of EXOC1, EXOC2, EXOC3, EXOC4, EXOC5, EXOC6, EXOC7 and EXOC8. Interacts with EXOC3L1. Interacts with BIRC6/bruce. Interacts with MYRIP. Interacts with SLC6A9. In terms of tissue distribution, expressed in epididymis (at protein level).

It is found in the cytoplasm. It localises to the perinuclear region. Its subcellular location is the cell projection. The protein resides in the growth cone. The protein localises to the midbody. It is found in the golgi apparatus. It localises to the neuron projection. Functionally, component of the exocyst complex involved in the docking of exocytic vesicles with fusion sites on the plasma membrane. The chain is Exocyst complex component 3 (EXOC3) from Homo sapiens (Human).